A 459-amino-acid polypeptide reads, in one-letter code: Nuclear hormone receptor family member nhr-11 (459 aa).

A DNA-binding region (nuclear receptor) is located at residues 2–81 (GPLCAVCESP…AGMRSELVRS (80 aa)). NR C4-type zinc fingers lie at residues 5–26 (CAVC…CKAC) and 42–69 (CAAD…LRKC). Disordered stretches follow at residues 90-119 (RRKD…EEMD) and 134-162 (DLPL…SSFD). Low complexity predominate over residues 97-115 (NSDAAPNSNSPSTRQSSSP). Residues 188-458 (ENNSILQYYH…SMLHEMLNFQ (271 aa)) form the NR LBD domain.

Belongs to the nuclear hormone receptor family.

The protein localises to the nucleus. In terms of biological role, orphan nuclear receptor. This chain is Nuclear hormone receptor family member nhr-11 (nhr-11), found in Caenorhabditis elegans.